The primary structure comprises 561 residues: DNA ligase (561 aa).

Glutamate 249 is a binding site for ATP. The N6-AMP-lysine intermediate role is filled by lysine 251. Residues arginine 256, arginine 271, glutamate 301, phenylalanine 340, arginine 417, and lysine 423 each contribute to the ATP site.

The protein belongs to the ATP-dependent DNA ligase family. The cofactor is Mg(2+).

It carries out the reaction ATP + (deoxyribonucleotide)n-3'-hydroxyl + 5'-phospho-(deoxyribonucleotide)m = (deoxyribonucleotide)n+m + AMP + diphosphate.. DNA ligase that seals nicks in double-stranded DNA during DNA replication, DNA recombination and DNA repair. In Methanothermobacter thermautotrophicus (strain ATCC 29096 / DSM 1053 / JCM 10044 / NBRC 100330 / Delta H) (Methanobacterium thermoautotrophicum), this protein is DNA ligase.